The primary structure comprises 621 residues: Glutathione-regulated potassium-efflux system protein KefC (621 aa).

Transmembrane regions (helical) follow at residues 4–24 (HTLIQALIYLGAAALIVPIAV), 26–46 (LGLGSVLGYLIAGCIIGPWAL), 54–74 (AILHFAEIGVVLMLFVIGLEL), 90–110 (GALQMVACGVLIGLFCMLLGL), 114–134 (VAELIGMTLALSSTAIAMQAM), 149–169 (FAVLLFQDIAAIPLVAMIPLL), 178–198 (LMAFALSALKVAAALALVVVL), 218–237 (VFSAVALFLVFGFGLLLEEV), 238–257 (GLSMAMGAFLAGVLLASSEY), 270–290 (GLLLGLFFIGVGMSIDFGTLV), 294–314 (LRIVILLVGFLAIKMLMLWLI), 326–346 (RWFAVLLGQGSEFAFVVFGAA), and 359–379 (ALTLAVALSMAATPILLVLLT). The 120-residue stretch at 399–518 (QPRVIVAGFG…AGVEAPERET (120 aa)) folds into the RCK N-terminal domain. The disordered stretch occupies residues 598 to 621 (GWQGTEEGRHTGDIADEPENKPSA).

This sequence belongs to the monovalent cation:proton antiporter 2 (CPA2) transporter (TC 2.A.37) family. KefC subfamily. In terms of assembly, homodimer. Interacts with the regulatory subunit KefF.

Its subcellular location is the cell inner membrane. In terms of biological role, pore-forming subunit of a potassium efflux system that confers protection against electrophiles. Catalyzes K(+)/H(+) antiport. This chain is Glutathione-regulated potassium-efflux system protein KefC, found in Klebsiella pneumoniae subsp. pneumoniae (strain ATCC 700721 / MGH 78578).